A 75-amino-acid chain; its full sequence is Translational regulator CsrA (75 aa).

Belongs to the CsrA/RsmA family. As to quaternary structure, homodimer; the beta-strands of each monomer intercalate to form a hydrophobic core, while the alpha-helices form wings that extend away from the core.

It localises to the cytoplasm. In terms of biological role, a translational regulator that binds mRNA to regulate translation initiation and/or mRNA stability. Usually binds in the 5'-UTR at or near the Shine-Dalgarno sequence preventing ribosome-binding, thus repressing translation. Its main target seems to be the major flagellin gene, while its function is anatagonized by FliW. The chain is Translational regulator CsrA from Acetivibrio thermocellus (strain ATCC 27405 / DSM 1237 / JCM 9322 / NBRC 103400 / NCIMB 10682 / NRRL B-4536 / VPI 7372) (Clostridium thermocellum).